The following is a 537-amino-acid chain: Extracellular exo-inulinase inuE (537 aa).

The first 19 residues, Met1–Ala19, serve as a signal peptide directing secretion. The active site involves Asp41. N-linked (GlcNAc...) asparagine glycans are attached at residues Asn49, Asn67, Asn112, Asn300, Asn363, Asn398, Asn430, and Asn531.

This sequence belongs to the glycosyl hydrolase 32 family.

The protein resides in the secreted. It catalyses the reaction Hydrolysis of terminal, non-reducing (2-&gt;1)- and (2-&gt;6)-linked beta-D-fructofuranose residues in fructans.. Functionally, exo-inulinase involved in utilization of the plant storage polymer inulin, consisting of fructooligosaccharides with a degree of polymerization (DP) value from 2 to 60. Splits off terminal fructose units successively from the non-reducing end of the inulin molecule, and also hydrolyze sucrose and raffinose. The protein is Extracellular exo-inulinase inuE (inuE) of Aspergillus niger (strain ATCC MYA-4892 / CBS 513.88 / FGSC A1513).